The primary structure comprises 436 residues: Prenyltransferase nscD (436 aa).

This sequence belongs to the tryptophan dimethylallyltransferase family.

The protein operates within secondary metabolite biosynthesis. Prenyltransferase; part of the gene cluster that mediates the biosynthesis of neosartoricin B, a prenylated anthracenone that probably exhibits T-cell antiproliferative activity, suggestive of a physiological role as an immunosuppressive agent. The non-reducing polyketide synthase nscA probably synthesizes and cyclizes the decaketide backbone. The hydrolase nscB then mediates the product release through hydrolysis followed by spontaneous decarboxylation. The prenyltransferase nscD catalyzes the addition of the dimethylallyl group to the aromatic C5. The FAD-dependent monooxygenase nscC is then responsible for the stereospecific hydroxylation at C2. Neosartoricin B can be converted into two additional compounds neosartoricins C and D. Neosartoricin C is a spirocyclic compound that is cyclized through the attack of C3 hydroxyl on C14, followed by dehydration. On the other hand, neosartoricin D is a further cyclized compound in which attack of C2 on C14 in neosartoricin C results in the formation of the acetal-containing dioxabicyclo-octanone ring. Both of these compounds are novel and possibly represent related metabolites of the gene cluster. This Trichophyton tonsurans (strain CBS 112818) (Scalp ringworm fungus) protein is Prenyltransferase nscD.